The following is a 600-amino-acid chain: Alpha pinene synthase, chloroplastic (600 aa).

Positions 1 to 27 (MSSISMHAGPLNISAANNHHPSWDRRV) are disordered. Residues 1–31 (MSSISMHAGPLNISAANNHHPSWDRRVSKPR) constitute a chloroplast transit peptide. Positions 354, 358, 498, and 506 each coordinate Mg(2+). The DDXXD motif signature appears at 354–358 (DDVYD).

It belongs to the terpene synthase family. Tpsa subfamily. The cofactor is Mg(2+). It depends on Mn(2+) as a cofactor. In terms of tissue distribution, expressed at low levels in leaves.

The protein resides in the plastid. It localises to the chloroplast. It carries out the reaction (2E)-geranyl diphosphate = alpha-pinene + diphosphate. Its pathway is secondary metabolite biosynthesis; terpenoid biosynthesis. In terms of biological role, monoterpene synthase involved in the biosynthesis of volatile compounds widely used in aromatherapy and folk medicine, and present in culinary herbs. Mediates the conversion of (2E)-geranyl diphosphate (GPP) into alpha-pinene and, as minor compounds, into alpha-phellandrene, limonene and alpha-terpinolene. This is Alpha pinene synthase, chloroplastic from Lavandula viridis (Green lavender).